Consider the following 249-residue polypeptide: MDAFYSTSSAYGAAASGWGYDSLKNFRQISPAVQSHLKLVYLTLCVALAASAVGAYLHVALNIGGMLTMLGCVGSIAWLFSVPVFEERKRFGILLAAALLEGASVGPLIKLAVDFDSSILVTAFVGTAIAFGCFTCAAIVAKRREYLYLGGLLSSGLSILLWLQFAASIFGHSTGSFMFEVYFGLLIFLGYMVYDTQEIIERAHHGDMDYIKHALTLFTDFVAVLVRILVIMLKNASDKSEEKKRKKRS.

The next 6 helical transmembrane spans lie at 39–59 (LVYL…YLHV), 65–85 (GMLT…VPVF), 93–113 (ILLA…KLAV), 119–139 (ILVT…CAAI), 151–171 (GLLS…SIFG), and 213–233 (HALT…VIML).

It belongs to the BI1 family. As to expression, ubiquitous.

It localises to the membrane. In terms of biological role, suppressor of apoptosis. This chain is Bax inhibitor 1 (BI1), found in Oryza sativa subsp. japonica (Rice).